A 225-amino-acid chain; its full sequence is NAD(P)H-quinone oxidoreductase subunit K, chloroplastic (225 aa).

[4Fe-4S] cluster-binding residues include Cys-43, Cys-44, Cys-108, and Cys-139.

It belongs to the complex I 20 kDa subunit family. As to quaternary structure, NDH is composed of at least 16 different subunits, 5 of which are encoded in the nucleus. The cofactor is [4Fe-4S] cluster.

The protein localises to the plastid. It localises to the chloroplast thylakoid membrane. It carries out the reaction a plastoquinone + NADH + (n+1) H(+)(in) = a plastoquinol + NAD(+) + n H(+)(out). The catalysed reaction is a plastoquinone + NADPH + (n+1) H(+)(in) = a plastoquinol + NADP(+) + n H(+)(out). NDH shuttles electrons from NAD(P)H:plastoquinone, via FMN and iron-sulfur (Fe-S) centers, to quinones in the photosynthetic chain and possibly in a chloroplast respiratory chain. The immediate electron acceptor for the enzyme in this species is believed to be plastoquinone. Couples the redox reaction to proton translocation, and thus conserves the redox energy in a proton gradient. The sequence is that of NAD(P)H-quinone oxidoreductase subunit K, chloroplastic from Triticum aestivum (Wheat).